A 56-amino-acid chain; its full sequence is Large ribosomal subunit protein bL32 (56 aa).

A disordered region spans residues 1 to 37 (MAVQQNKKSRSRRDMRRSHDALTTAAVSVDKTTGETH). Residues 7-16 (KKSRSRRDMR) show a composition bias toward basic residues.

This sequence belongs to the bacterial ribosomal protein bL32 family.

In Haemophilus ducreyi (strain 35000HP / ATCC 700724), this protein is Large ribosomal subunit protein bL32.